A 287-amino-acid polypeptide reads, in one-letter code: Phosphatidylserine decarboxylase proenzyme (287 aa).

Active-site charge relay system; for autoendoproteolytic cleavage activity residues include Asp90, His147, and Ser253. The Schiff-base intermediate with substrate; via pyruvic acid; for decarboxylase activity role is filled by Ser253. Pyruvic acid (Ser); by autocatalysis is present on Ser253.

It belongs to the phosphatidylserine decarboxylase family. PSD-B subfamily. Prokaryotic type I sub-subfamily. Heterodimer of a large membrane-associated beta subunit and a small pyruvoyl-containing alpha subunit. Requires pyruvate as cofactor. In terms of processing, is synthesized initially as an inactive proenzyme. Formation of the active enzyme involves a self-maturation process in which the active site pyruvoyl group is generated from an internal serine residue via an autocatalytic post-translational modification. Two non-identical subunits are generated from the proenzyme in this reaction, and the pyruvate is formed at the N-terminus of the alpha chain, which is derived from the carboxyl end of the proenzyme. The autoendoproteolytic cleavage occurs by a canonical serine protease mechanism, in which the side chain hydroxyl group of the serine supplies its oxygen atom to form the C-terminus of the beta chain, while the remainder of the serine residue undergoes an oxidative deamination to produce ammonia and the pyruvoyl prosthetic group on the alpha chain. During this reaction, the Ser that is part of the protease active site of the proenzyme becomes the pyruvoyl prosthetic group, which constitutes an essential element of the active site of the mature decarboxylase.

The protein localises to the cell membrane. It catalyses the reaction a 1,2-diacyl-sn-glycero-3-phospho-L-serine + H(+) = a 1,2-diacyl-sn-glycero-3-phosphoethanolamine + CO2. Its pathway is phospholipid metabolism; phosphatidylethanolamine biosynthesis; phosphatidylethanolamine from CDP-diacylglycerol: step 2/2. In terms of biological role, catalyzes the formation of phosphatidylethanolamine (PtdEtn) from phosphatidylserine (PtdSer). This chain is Phosphatidylserine decarboxylase proenzyme, found in Aliivibrio salmonicida (strain LFI1238) (Vibrio salmonicida (strain LFI1238)).